Here is a 142-residue protein sequence, read N- to C-terminus: Photosystem II extrinsic protein U (142 aa).

Positions 1 to 28 are cleaved as a signal peptide; the sequence is MKKIGLLLTIFSLCLGCLGLVPSDKAHA.

Belongs to the PsbU family. In terms of assembly, PSII is composed of 1 copy each of membrane proteins PsbA, PsbB, PsbC, PsbD, PsbE, PsbF, PsbH, PsbI, PsbJ, PsbK, PsbL, PsbM, PsbT, PsbX, PsbY, PsbZ, Psb30/Ycf12, peripheral proteins PsbO, CyanoQ (PsbQ), PsbU, PsbV and a large number of cofactors. It forms dimeric complexes.

It localises to the cellular thylakoid membrane. Its function is as follows. One of the extrinsic, lumenal subunits of photosystem II (PSII). PSII is a light-driven water plastoquinone oxidoreductase, using light energy to abstract electrons from H(2)O, generating a proton gradient subsequently used for ATP formation. The extrinsic proteins stabilize the structure of photosystem II oxygen-evolving complex (OEC), the ion environment of oxygen evolution and protect the OEC against heat-induced inactivation. The sequence is that of Photosystem II extrinsic protein U from Trichodesmium erythraeum (strain IMS101).